A 168-amino-acid chain; its full sequence is Ribosome maturation factor RimM (168 aa).

The PRC barrel domain occupies 95 to 168 (KEGYYWSDLI…QIMVDWELDY (74 aa)).

Belongs to the RimM family. As to quaternary structure, binds ribosomal protein uS19.

It localises to the cytoplasm. In terms of biological role, an accessory protein needed during the final step in the assembly of 30S ribosomal subunit, possibly for assembly of the head region. Essential for efficient processing of 16S rRNA. May be needed both before and after RbfA during the maturation of 16S rRNA. It has affinity for free ribosomal 30S subunits but not for 70S ribosomes. This Nitrosomonas eutropha (strain DSM 101675 / C91 / Nm57) protein is Ribosome maturation factor RimM.